A 107-amino-acid polypeptide reads, in one-letter code: Integration host factor subunit beta (107 aa).

A disordered region spans residues 55–107; it reads RRPARVGRNPKSGEKVQVPEKHVPHFKPGKELRERVDGRAGEPLKNDEPEDAQ. Over residues 65–101 the composition is skewed to basic and acidic residues; it reads KSGEKVQVPEKHVPHFKPGKELRERVDGRAGEPLKND.

This sequence belongs to the bacterial histone-like protein family. In terms of assembly, heterodimer of an alpha and a beta chain.

Functionally, this protein is one of the two subunits of integration host factor, a specific DNA-binding protein that functions in genetic recombination as well as in transcriptional and translational control. This chain is Integration host factor subunit beta, found in Burkholderia pseudomallei (strain K96243).